Here is a 134-residue protein sequence, read N- to C-terminus: Large ribosomal subunit protein bL20 (134 aa).

It belongs to the bacterial ribosomal protein bL20 family.

Binds directly to 23S ribosomal RNA and is necessary for the in vitro assembly process of the 50S ribosomal subunit. It is not involved in the protein synthesizing functions of that subunit. The chain is Large ribosomal subunit protein bL20 from Rhizobium etli (strain ATCC 51251 / DSM 11541 / JCM 21823 / NBRC 15573 / CFN 42).